Consider the following 256-residue polypeptide: uncharacterized protein (256 aa).

This is an uncharacterized protein from Escherichia coli (strain K12).